The primary structure comprises 265 residues: MNDMTAMDSTVETQRTKIAAKGVNVYYGDSHAIKDVNVEIEDKTVTAFIGPSGCGKSTFLRCLNRMNDTIDICRVTGDILLEGEDIYDKRVDPVQLRAQVGMVFQKPNPFPKSIYDNVAYGPRIHGLAKNKAELDEIVEKSLRRGAIWDEVKDRLHAPGTGLSGGQQQRLCIARAVATEPEVLLMDEPCSALDPIATAQVEELIDELRENYSVVIVTHSMQQAARVSQKTAFFHLGNLVEFGPTGQIFTNPEDPRTESYITGRIG.

Residues Ile-18 to Ile-260 enclose the ABC transporter domain. Gly-50 to Ser-57 lines the ATP pocket.

This sequence belongs to the ABC transporter superfamily. Phosphate importer (TC 3.A.1.7) family. As to quaternary structure, the complex is composed of two ATP-binding proteins (PstB), two transmembrane proteins (PstC and PstA) and a solute-binding protein (PstS).

It is found in the cell inner membrane. It catalyses the reaction phosphate(out) + ATP + H2O = ADP + 2 phosphate(in) + H(+). Functionally, part of the ABC transporter complex PstSACB involved in phosphate import. Responsible for energy coupling to the transport system. The sequence is that of Phosphate import ATP-binding protein PstB from Ruegeria sp. (strain TM1040) (Silicibacter sp.).